A 110-amino-acid polypeptide reads, in one-letter code: uncharacterized protein (110 aa).

The tract at residues 86–110 is disordered; sequence SEEIDEPVMKKRHRRKGSPHRAPFF. Residues 95–104 show a composition bias toward basic residues; it reads KKRHRRKGSP.

This is an uncharacterized protein from Arabidopsis thaliana (Mouse-ear cress).